Consider the following 778-residue polypeptide: Endonuclease MutS2 (778 aa).

328–335 (GPNTGGKT) is an ATP binding site. The Smr domain occupies 702–777 (LDLRGKRYEE…GSGATIVTFK (76 aa)).

The protein belongs to the DNA mismatch repair MutS family. MutS2 subfamily. Homodimer. Binds to stalled ribosomes, contacting rRNA.

Its function is as follows. Endonuclease that is involved in the suppression of homologous recombination and thus may have a key role in the control of bacterial genetic diversity. Functionally, acts as a ribosome collision sensor, splitting the ribosome into its 2 subunits. Detects stalled/collided 70S ribosomes which it binds and splits by an ATP-hydrolysis driven conformational change. Acts upstream of the ribosome quality control system (RQC), a ribosome-associated complex that mediates the extraction of incompletely synthesized nascent chains from stalled ribosomes and their subsequent degradation. Probably generates substrates for RQC. The polypeptide is Endonuclease MutS2 (Streptococcus pneumoniae (strain 70585)).